A 628-amino-acid polypeptide reads, in one-letter code: tRNA uridine 5-carboxymethylaminomethyl modification enzyme MnmG (628 aa).

FAD contacts are provided by residues 14 to 19 (GAGHAG), Val126, and Ser181. NAD(+) is bound at residue 273-287 (GPRYCPSIEDKVVRF). Residue Gln370 coordinates FAD.

This sequence belongs to the MnmG family. Homodimer. Heterotetramer of two MnmE and two MnmG subunits. FAD serves as cofactor.

The protein resides in the cytoplasm. In terms of biological role, NAD-binding protein involved in the addition of a carboxymethylaminomethyl (cmnm) group at the wobble position (U34) of certain tRNAs, forming tRNA-cmnm(5)s(2)U34. This chain is tRNA uridine 5-carboxymethylaminomethyl modification enzyme MnmG, found in Bacillus subtilis (strain 168).